Reading from the N-terminus, the 301-residue chain is NAD kinase (301 aa).

D73 functions as the Proton acceptor in the catalytic mechanism. Residues 73–74 (DG), 151–152 (ND), R179, D181, 192–197 (TAYALS), A216, and Q250 each bind NAD(+).

It belongs to the NAD kinase family. The cofactor is a divalent metal cation.

It localises to the cytoplasm. The enzyme catalyses NAD(+) + ATP = ADP + NADP(+) + H(+). Its function is as follows. Involved in the regulation of the intracellular balance of NAD and NADP, and is a key enzyme in the biosynthesis of NADP. Catalyzes specifically the phosphorylation on 2'-hydroxyl of the adenosine moiety of NAD to yield NADP. This Methylibium petroleiphilum (strain ATCC BAA-1232 / LMG 22953 / PM1) protein is NAD kinase.